The chain runs to 289 residues: Phospholipase A1 (289 aa).

Residues 1 to 20 (MRTLQGWLLPVFMLPMAVYA) form the signal peptide. Residues 21–52 (QEATVKEVHDAPAVRGSIIANMLQEHDNPFTL) are Periplasmic-facing. Residues 53 to 65 (YPYDTNYLIYTQT) form a beta stranded membrane-spanning segment. The Extracellular portion of the chain corresponds to 66-84 (SDLNKEAIASYDWAENARK). Residues 85–99 (DEVKFQLSLAFPLWR) form a beta stranded membrane-spanning segment. Residues 100–105 (GILGPN) lie on the Periplasmic side of the membrane. A beta stranded membrane pass occupies residues 106–118 (SVLGASYTQKSWW). Topologically, residues 119-128 (QLSNSEESSP) are extracellular. Ca(2+) is bound at residue Ser-126. Residues 129–148 (FRETNYEPQLFLGFATDYRF) traverse the membrane as a beta stranded segment. Residues 149-150 (AG) are Periplasmic-facing. A beta stranded transmembrane segment spans residues 151–164 (WTLRDVEMGYNHDS). The active-site Proton acceptor is His-162. Ser-164 (nucleophile) is an active-site residue. Residues 165 to 173 (NGRSDPTSR) lie on the Extracellular side of the membrane. Ca(2+)-binding residues include Arg-167 and Ser-172. Residues 174 to 186 (SWNRLYTRLMAEN) traverse the membrane as a beta stranded segment. Topologically, residues 187 to 188 (GN) are periplasmic. The chain crosses the membrane as a beta stranded span at residues 189–198 (WLVEVKPWYV). At 199 to 216 (VGNTDDNPDITKYMGYYQ) the chain is on the extracellular side. Asp-204 lines the Ca(2+) pocket. A beta stranded membrane pass occupies residues 217–223 (LKIGYHL). Residues 224 to 225 (GD) are Periplasmic-facing. A beta stranded membrane pass occupies residues 226 to 234 (AVLSAKGQY). Topologically, residues 235 to 241 (NWNTGYG) are extracellular. A beta stranded transmembrane segment spans residues 242 to 250 (GAELGLSYP). Over 251 to 255 (ITKHV) the chain is Periplasmic. A beta stranded membrane pass occupies residues 256 to 265 (RLYTQVYSGY). Residues 266–274 (GESLIDYNF) lie on the Extracellular side of the membrane. The chain crosses the membrane as a beta stranded span at residues 275 to 286 (NQTRVGVGVMLN). Residues 287 to 289 (DLF) lie on the Periplasmic side of the membrane.

It belongs to the phospholipase A1 family. As to quaternary structure, homodimer; dimerization is reversible, and the dimeric form is the active one. The cofactor is Ca(2+).

It is found in the cell outer membrane. It catalyses the reaction a 1,2-diacyl-sn-glycero-3-phosphocholine + H2O = a 2-acyl-sn-glycero-3-phosphocholine + a fatty acid + H(+). The enzyme catalyses a 1,2-diacyl-sn-glycero-3-phosphocholine + H2O = a 1-acyl-sn-glycero-3-phosphocholine + a fatty acid + H(+). Hydrolysis of phosphatidylcholine with phospholipase A2 (EC 3.1.1.4) and phospholipase A1 (EC 3.1.1.32) activities. This is Phospholipase A1 (pldA) from Escherichia coli O157:H7.